The sequence spans 451 residues: UDP-N-acetylmuramate--L-alanine ligase (451 aa).

110 to 116 (GTHGKTT) contacts ATP.

The protein belongs to the MurCDEF family.

Its subcellular location is the cytoplasm. It carries out the reaction UDP-N-acetyl-alpha-D-muramate + L-alanine + ATP = UDP-N-acetyl-alpha-D-muramoyl-L-alanine + ADP + phosphate + H(+). It participates in cell wall biogenesis; peptidoglycan biosynthesis. Functionally, cell wall formation. The polypeptide is UDP-N-acetylmuramate--L-alanine ligase (Francisella tularensis subsp. mediasiatica (strain FSC147)).